The sequence spans 504 residues: Apoptosis inhibitor 5 (504 aa).

An ARM-like and Heat-like helical repeats region spans residues 1 to 360; it reads MPTVEELYRN…HQLGRKLPDF (360 aa). N6-acetyllysine is present on K251. Residues 370–391 form a leucine-zipper region; that stretch reads LKDFKIRLQYFARGLQVYIRQL. T399 is modified (phosphothreonine). The tract at residues 452 to 504 is disordered; it reads GQKRASEDTTSGSPPKKSSAGPKRDARQIYNPPSGKYSSNLGNFNYERSLQGK. The Nuclear localization signal motif lies at 454 to 475; sequence KRASEDTTSGSPPKKSSAGPKR. Phosphoserine occurs at positions 462, 464, and 469. The span at 462–472 shows a compositional bias: low complexity; it reads SGSPPKKSSAG. Positions 487–504 are enriched in polar residues; it reads KYSSNLGNFNYERSLQGK.

Belongs to the API5 family. In terms of assembly, monomer. Interacts with FGF2 and ACIN1. Acetylation at Lys-251 impairs antiapoptotic function.

It localises to the nucleus. The protein localises to the cytoplasm. Its function is as follows. Antiapoptotic factor that may have a role in protein assembly. Negatively regulates ACIN1. By binding to ACIN1, it suppresses ACIN1 cleavage from CASP3 and ACIN1-mediated DNA fragmentation. Also known to efficiently suppress E2F1-induced apoptosis. The sequence is that of Apoptosis inhibitor 5 (API5) from Pongo abelii (Sumatran orangutan).